Reading from the N-terminus, the 349-residue chain is Protein RecA (349 aa).

ATP is bound at residue 65-72 (GPESSGKT). Residues 329–349 (FDGDVDENENEDDSPKTLFDE) form a disordered region. Residues 331-340 (GDVDENENED) show a composition bias toward acidic residues.

This sequence belongs to the RecA family.

It is found in the cytoplasm. Functionally, can catalyze the hydrolysis of ATP in the presence of single-stranded DNA, the ATP-dependent uptake of single-stranded DNA by duplex DNA, and the ATP-dependent hybridization of homologous single-stranded DNAs. It interacts with LexA causing its activation and leading to its autocatalytic cleavage. This Staphylococcus epidermidis (strain ATCC 35984 / DSM 28319 / BCRC 17069 / CCUG 31568 / BM 3577 / RP62A) protein is Protein RecA.